Consider the following 652-residue polypeptide: DNA ligase (652 aa).

Residues 29 to 33, 78 to 79, and Glu-107 each bind NAD(+); these read DSEYD and SL. Lys-109 functions as the N6-AMP-lysine intermediate in the catalytic mechanism. 4 residues coordinate NAD(+): Arg-130, Glu-164, Lys-278, and Lys-302. Zn(2+)-binding residues include Cys-395, Cys-398, Cys-413, and Cys-418. The region spanning 577 to 652 is the BRCT domain; it reads AADAVLSGKT…IQDEAWLEQL (76 aa).

Belongs to the NAD-dependent DNA ligase family. LigA subfamily. It depends on Mg(2+) as a cofactor. The cofactor is Mn(2+).

The catalysed reaction is NAD(+) + (deoxyribonucleotide)n-3'-hydroxyl + 5'-phospho-(deoxyribonucleotide)m = (deoxyribonucleotide)n+m + AMP + beta-nicotinamide D-nucleotide.. DNA ligase that catalyzes the formation of phosphodiester linkages between 5'-phosphoryl and 3'-hydroxyl groups in double-stranded DNA using NAD as a coenzyme and as the energy source for the reaction. It is essential for DNA replication and repair of damaged DNA. The polypeptide is DNA ligase (Streptococcus gordonii (strain Challis / ATCC 35105 / BCRC 15272 / CH1 / DL1 / V288)).